Reading from the N-terminus, the 477-residue chain is MSPQTETKASVGFQAGVKDYKLTYYTPEYETKDTDILAAFRVTPQPGVPPEEAGAAVAAESSTGTWTTVWTDGLTSLDRYKGRCYHIEPVAGEDNQWICYVAYPLDLFEEGSVTNMFTSIVGNVFGFKALRALRLEDLRIPVAYSKTFQGPPHGIQVERDKLNKYGRPLLGCTIKPKLGLSAKNYGRACYECLRGGLDFTKDDENVNSQPFMRWRDRFVFCAEALYKAQAETGEIKGHYLNATAGTCEEMIKRAVFARELGVPIVMHDYITGGFTANTSLAHYCRDNGLLLHIHRAMHAVIDRQKNHGMHFRVLAKALRMSGGDHIHSGTVVGKLEGEREMTLGFVDLLRDDFIEKDRARGIFFTQDWASMPGVIPVASGGIHVWHMPALTEIFGDDSVLQFGGGTLGHPWGNAPGAAANRVALEACVQARNEGRDLAREGNEIIRAACKWSPELAAACEVWKAIKFEFEPVDTIDN.

The propeptide occupies 1–2 (MS). Proline 3 bears the N-acetylproline mark. The substrate site is built by asparagine 123 and threonine 173. Lysine 175 serves as the catalytic Proton acceptor. Residue lysine 177 participates in substrate binding. 3 residues coordinate Mg(2+): lysine 201, aspartate 203, and glutamate 204. The residue at position 201 (lysine 201) is an N6-carboxylysine. Histidine 294 functions as the Proton acceptor in the catalytic mechanism. Substrate is bound by residues arginine 295, histidine 327, and serine 379.

The protein belongs to the RuBisCO large chain family. Type I subfamily. As to quaternary structure, heterohexadecamer of 8 large chains and 8 small chains; disulfide-linked. The disulfide link is formed within the large subunit homodimers. It depends on Mg(2+) as a cofactor. The disulfide bond which can form in the large chain dimeric partners within the hexadecamer appears to be associated with oxidative stress and protein turnover.

It is found in the plastid. The protein localises to the chloroplast. It catalyses the reaction 2 (2R)-3-phosphoglycerate + 2 H(+) = D-ribulose 1,5-bisphosphate + CO2 + H2O. The enzyme catalyses D-ribulose 1,5-bisphosphate + O2 = 2-phosphoglycolate + (2R)-3-phosphoglycerate + 2 H(+). In terms of biological role, ruBisCO catalyzes two reactions: the carboxylation of D-ribulose 1,5-bisphosphate, the primary event in carbon dioxide fixation, as well as the oxidative fragmentation of the pentose substrate in the photorespiration process. Both reactions occur simultaneously and in competition at the same active site. The chain is Ribulose bisphosphate carboxylase large chain from Lolium perenne (Perennial ryegrass).